We begin with the raw amino-acid sequence, 149 residues long: Transcriptional regulator MraZ (149 aa).

2 consecutive SpoVT-AbrB domains span residues 7 to 54 (KYVN…GISH) and 83 to 126 (AVQL…QPQN).

This sequence belongs to the MraZ family. Forms oligomers.

The protein localises to the cytoplasm. It is found in the nucleoid. The sequence is that of Transcriptional regulator MraZ from Rickettsia conorii (strain ATCC VR-613 / Malish 7).